The following is a 391-amino-acid chain: GDSL esterase/lipase 22 (391 aa).

Positions 1–29 (MMANNCNLVSVLCVILVLTLFHNPITVAG) are cleaved as a signal peptide. Serine 43 serves as the catalytic Nucleophile. 3 N-linked (GlcNAc...) asparagine glycosylation sites follow: asparagine 105, asparagine 165, and asparagine 288. Catalysis depends on residues aspartate 322 and histidine 325. Residues 372–391 (PATVHASDSSSSTSRGYEYY) form a disordered region.

This sequence belongs to the 'GDSL' lipolytic enzyme family. Component of the PYK10 complex, at least composed of PYK10/BGLU23, BGLU21, BGLU22, JAL22, JAL23, PBP1/JAL30, PBP2/JAL31, JAL32, JAL33, JAL34, JAL35, GLL22 and GLL23.

It localises to the secreted. This chain is GDSL esterase/lipase 22 (GLL22), found in Arabidopsis thaliana (Mouse-ear cress).